A 240-amino-acid chain; its full sequence is tRNA (guanine-N(1)-)-methyltransferase (240 aa).

Residues glycine 108 and 127–132 (LGDYIL) each bind S-adenosyl-L-methionine.

This sequence belongs to the RNA methyltransferase TrmD family. Homodimer.

Its subcellular location is the cytoplasm. It carries out the reaction guanosine(37) in tRNA + S-adenosyl-L-methionine = N(1)-methylguanosine(37) in tRNA + S-adenosyl-L-homocysteine + H(+). Specifically methylates guanosine-37 in various tRNAs. This Streptococcus sanguinis (strain SK36) protein is tRNA (guanine-N(1)-)-methyltransferase.